The following is a 107-amino-acid chain: Ubiquitin-related modifier 1 (107 aa).

Gly107 bears the 1-thioglycine mark. Gly107 is covalently cross-linked (Glycyl lysine isopeptide (Gly-Lys) (interchain with K-? in acceptor proteins)).

The protein belongs to the URM1 family. Post-translationally, C-terminal thiocarboxylation occurs in 2 steps, it is first acyl-adenylated (-COAMP) via the hesA/moeB/thiF part of UBA4, then thiocarboxylated (-COSH) via the rhodanese domain of UBA4.

The protein localises to the cytoplasm. The protein operates within tRNA modification; 5-methoxycarbonylmethyl-2-thiouridine-tRNA biosynthesis. Its function is as follows. Acts as a sulfur carrier required for 2-thiolation of mcm(5)S(2)U at tRNA wobble positions of cytosolic tRNA(Lys), tRNA(Glu) and tRNA(Gln). Serves as sulfur donor in tRNA 2-thiolation reaction by being thiocarboxylated (-COSH) at its C-terminus by the MOCS3 homolog UBA4. The sulfur is then transferred to tRNA to form 2-thiolation of mcm(5)S(2)U. Prior mcm(5) tRNA modification by the elongator complex is required for 2-thiolation. Also acts as a ubiquitin-like protein (UBL) that is covalently conjugated via an isopeptide bond to lysine residues of target proteins such as AHP1. The thiocarboxylated form serves as substrate for conjugation and oxidative stress specifically induces the formation of UBL-protein conjugates. The polypeptide is Ubiquitin-related modifier 1 (Mycosarcoma maydis (Corn smut fungus)).